Consider the following 423-residue polypeptide: MAGRVKWVTDIEKSVLINNFEKRGWVQVTENEDWNFYWMSVQTIRNVFSVETGYRLSDDQIVNHFPNHYELTRKDLMVKNIKRYRKELEKEGSPLAEKDENGKYLYLDFVPVTYMLPADYNLFVEEFRKSPSSTWIMKPCGKAQGKGIFLINKLSQIKKWSRDSKTSSFVSQSTKEAYVISLYINNPLLIGGRKFDLRLYVLVSTYRPLRCYMYKLGFCRFCTVKYTPSTSELDNMFVHLTNVAIQKHGEDYNHIHGGKWTVNNLRLYLESTRGREVTSKLFDEIHWIIVQSLKAVAPVMNNDKHCFECYGYDIIIDDKLKPWLIEVNASPSLTSSTANDRILKYNLINDTLNIAVPNGEIPDCKWNKSPPKEVLGNYEILYDEELAQGDGAERELRSRPGQPVGPRTGRSRDSGRNVLTTWK.

Residues 1–367 (MAGRVKWVTD…NGEIPDCKWN (367 aa)) form the TTL domain. ATP contacts are provided by residues K138, 144-145 (QG), 181-184 (SLYI), and 194-196 (KFD). Q144 is a binding site for a protein. R220 lines the L-glutamate pocket. Residue 241–242 (TN) participates in ATP binding. K259 is a binding site for L-glutamate. Positions 313, 326, and 328 each coordinate Mg(2+). K344 contacts L-glutamate. Residues 390 to 423 (DGAERELRSRPGQPVGPRTGRSRDSGRNVLTTWK) are disordered.

Belongs to the tubulin polyglutamylase family. As to quaternary structure, part of the neuronal tubulin polyglutamylase complex which contains TPGS1, TPGS2, TTLL1, LRRC49 and NICN1. Interacts with PCM1, CSTPP1 and LRRC49. The cofactor is Mg(2+).

The protein localises to the cytoplasm. It localises to the cytoskeleton. The protein resides in the cilium basal body. Its subcellular location is the cilium axoneme. It is found in the cell projection. The protein localises to the cilium. It localises to the flagellum. The catalysed reaction is (L-glutamyl)(n)-gamma-L-glutamyl-L-glutamyl-[protein] + L-glutamate + ATP = (L-glutamyl)(n+1)-gamma-L-glutamyl-L-glutamyl-[protein] + ADP + phosphate + H(+). Its function is as follows. Catalytic subunit of a polyglutamylase complex which modifies tubulin, generating side chains of glutamate on the gamma-carboxyl group of specific glutamate residues within the C-terminal tail of tubulin. Probably involved in the side-chain elongation step of the polyglutamylation reaction rather than the initiation step. Modifies both alpha- and beta-tubulins with a preference for the alpha-tail. Unlike most polyglutamylases of the tubulin--tyrosine ligase family, only displays a catalytic activity when in complex with other proteins as it is most likely lacking domains important for autonomous activity. Part of the neuronal tubulin polyglutamylase complex. Mediates cilia and flagella polyglutamylation which is essential for their biogenesis and motility. Involved in respiratory motile cilia function through the regulation of beating asymmetry. Essential for sperm flagella biogenesis, motility and male fertility. Involved in KLF4 glutamylation which impedes its ubiquitination, thereby leading to somatic cell reprogramming, pluripotency maintenance and embryogenesis. The polypeptide is Polyglutamylase complex subunit TTLL1 (Ttll1) (Rattus norvegicus (Rat)).